The primary structure comprises 191 residues: Thymidylate kinase (191 aa).

7 to 14 (GIDTAGKS) serves as a coordination point for ATP.

This sequence belongs to the thymidylate kinase family.

The catalysed reaction is dTMP + ATP = dTDP + ADP. Functionally, phosphorylation of dTMP to form dTDP in both de novo and salvage pathways of dTTP synthesis. This chain is Thymidylate kinase, found in Sulfurimonas denitrificans (strain ATCC 33889 / DSM 1251) (Thiomicrospira denitrificans (strain ATCC 33889 / DSM 1251)).